Reading from the N-terminus, the 149-residue chain is MRTFSPKPSDIQRQWHVIDASDVVLGRLASRVATLLRGKHKPYYAPHVDTGDYVIVVNADKVVLTGKKLEQKRAYRHSGYPGGLRSIPYSELMAKNPARAVEKAVKGMLPKNSLGRRMAKKLKVYAGPEHPHQAQKPVPYEITKIKQPA.

Belongs to the universal ribosomal protein uL13 family. Part of the 50S ribosomal subunit.

Its function is as follows. This protein is one of the early assembly proteins of the 50S ribosomal subunit, although it is not seen to bind rRNA by itself. It is important during the early stages of 50S assembly. This Thermobifida fusca (strain YX) protein is Large ribosomal subunit protein uL13.